The following is a 245-amino-acid chain: 1-(5-phosphoribosyl)-5-[(5-phosphoribosylamino)methylideneamino] imidazole-4-carboxamide isomerase (245 aa).

Catalysis depends on Asp-8, which acts as the Proton acceptor. The active-site Proton donor is Asp-130.

The protein belongs to the HisA/HisF family.

The protein localises to the cytoplasm. The enzyme catalyses 1-(5-phospho-beta-D-ribosyl)-5-[(5-phospho-beta-D-ribosylamino)methylideneamino]imidazole-4-carboxamide = 5-[(5-phospho-1-deoxy-D-ribulos-1-ylimino)methylamino]-1-(5-phospho-beta-D-ribosyl)imidazole-4-carboxamide. It participates in amino-acid biosynthesis; L-histidine biosynthesis; L-histidine from 5-phospho-alpha-D-ribose 1-diphosphate: step 4/9. This is 1-(5-phosphoribosyl)-5-[(5-phosphoribosylamino)methylideneamino] imidazole-4-carboxamide isomerase from Pseudomonas entomophila (strain L48).